We begin with the raw amino-acid sequence, 295 residues long: Bifunctional protein FolD (295 aa).

NADP(+) contacts are provided by residues 166–168 (GRS), S195, and I236.

It belongs to the tetrahydrofolate dehydrogenase/cyclohydrolase family. As to quaternary structure, homodimer.

The catalysed reaction is (6R)-5,10-methylene-5,6,7,8-tetrahydrofolate + NADP(+) = (6R)-5,10-methenyltetrahydrofolate + NADPH. The enzyme catalyses (6R)-5,10-methenyltetrahydrofolate + H2O = (6R)-10-formyltetrahydrofolate + H(+). Its pathway is one-carbon metabolism; tetrahydrofolate interconversion. Its function is as follows. Catalyzes the oxidation of 5,10-methylenetetrahydrofolate to 5,10-methenyltetrahydrofolate and then the hydrolysis of 5,10-methenyltetrahydrofolate to 10-formyltetrahydrofolate. The protein is Bifunctional protein FolD of Prosthecochloris aestuarii (strain DSM 271 / SK 413).